The chain runs to 872 residues: Cyanophycin synthetase (872 aa).

In terms of domain architecture, ATP-grasp spans 224-480 (KTILQDAGVP…VAAPVMDMLF (257 aa)). 495-501 (GTNGKTT) is a binding site for ATP.

This sequence in the C-terminal section; belongs to the MurCDEF family. Homodimer.

The catalysed reaction is [L-4-(L-arginin-2-N-yl)aspartate](n) + L-aspartate + ATP = [L-4-(L-arginin-2-N-yl)aspartate](n)-L-aspartate + ADP + phosphate + H(+). The enzyme catalyses [L-4-(L-arginin-2-N-yl)aspartate](n)-L-aspartate + L-arginine + ATP = [L-4-(L-arginin-2-N-yl)aspartate](n+1) + ADP + phosphate + H(+). Functionally, catalyzes the ATP-dependent polymerization of arginine and aspartate to multi-L-arginyl-poly-L-aspartic acid (cyanophycin; a water-insoluble reserve polymer). This is Cyanophycin synthetase (cphA) from Crocosphaera subtropica (strain ATCC 51142 / BH68) (Cyanothece sp. (strain ATCC 51142)).